The sequence spans 237 residues: Beta-glucanase (237 aa).

An N-terminal signal peptide occupies residues 1–23; the sequence is MKKKSCFTLVTTFAFSLIFSVSA. Positions 28–237 constitute a GH16 domain; sequence VFWEPLSYFN…EYDWVKYTSN (210 aa). Cysteine 55 and cysteine 84 are oxidised to a cystine. The active-site Nucleophile is the glutamate 128. Glutamate 132 acts as the Proton donor in catalysis.

Belongs to the glycosyl hydrolase 16 family.

The catalysed reaction is Hydrolysis of (1-&gt;4)-beta-D-glucosidic linkages in beta-D-glucans containing (1-&gt;3)- and (1-&gt;4)-bonds.. The protein is Beta-glucanase of Paenibacillus macerans (Bacillus macerans).